Consider the following 380-residue polypeptide: ATPase ASNA1 homolog (380 aa).

Residue 48-55 (KGGVGKTT) coordinates ATP. Residue D77 is part of the active site. ATP contacts are provided by E248 and N275.

Belongs to the arsA ATPase family. As to quaternary structure, homodimer.

The protein localises to the cytoplasm. Its subcellular location is the endoplasmic reticulum. Functionally, ATPase required for the post-translational delivery of tail-anchored (TA) proteins to the endoplasmic reticulum. Recognizes and selectively binds the transmembrane domain of TA proteins in the cytosol. This complex then targets to the endoplasmic reticulum by membrane-bound receptors, where the tail-anchored protein is released for insertion. This process is regulated by ATP binding and hydrolysis. ATP binding drives the homodimer towards the closed dimer state, facilitating recognition of newly synthesized TA membrane proteins. ATP hydrolysis is required for insertion. Subsequently, the homodimer reverts towards the open dimer state, lowering its affinity for the membrane-bound receptor, and returning it to the cytosol to initiate a new round of targeting. This Plasmodium chabaudi chabaudi protein is ATPase ASNA1 homolog.